Here is a 521-residue protein sequence, read N- to C-terminus: Proactivator polypeptide-like 1 (521 aa).

The signal sequence occupies residues 1–17 (MLCALLLLPSLLGATRA). Positions 18–59 (SPTSGPQECAKGSTVWCQDLQTAARCGAVGYCQGAVWNKPTA) are excised as a propeptide. Positions 19–59 (PTSGPQECAKGSTVWCQDLQTAARCGAVGYCQGAVWNKPTA) constitute a Saposin A-type 1 domain. Saposin B-type domains lie at 60-144 (KSLP…EPLQ) and 180-258 (EGAL…EELG). Disulfide bonds link cysteine 64-cysteine 140, cysteine 67-cysteine 134, and cysteine 95-cysteine 107. A propeptide spanning residues 146 to 180 (HLATLRPLSKEDTFEAVAPFMANGPLTFHPRQAPE) is cleaved from the precursor. 3 disulfide bridges follow: cysteine 184–cysteine 254, cysteine 187–cysteine 248, and cysteine 213–cysteine 224. An N-linked (GlcNAc...) asparagine glycan is attached at asparagine 201. The propeptide occupies 259–288 (APARLTQVVAMDGVPSLELGLPRKQSEMQM). 2 Saposin B-type domains span residues 290 to 370 (AGVT…GNRR) and 392 to 473 (QGSF…HGPR). 3 disulfide bridges follow: cysteine 294–cysteine 366, cysteine 297–cysteine 360, and cysteine 325–cysteine 336. A glycan (N-linked (GlcNAc...) asparagine) is linked at asparagine 311. Positions 370 to 391 (RRARAVHDAYAIVPSPEWDAEN) are excised as a propeptide. 3 disulfide bridges follow: cysteine 396–cysteine 469, cysteine 399–cysteine 463, and cysteine 427–cysteine 438. The propeptide occupies 474–521 (TPLLGTDQCALGPSFWCRSQEAAKLCNAVQHCQKHVWKEMHLHAGEHA). The 41-residue stretch at 475–515 (PLLGTDQCALGPSFWCRSQEAAKLCNAVQHCQKHVWKEMHL) folds into the Saposin A-type 2 domain.

The protein localises to the secreted. May activate the lysosomal degradation of sphingolipids. This is Proactivator polypeptide-like 1 (PSAPL1) from Homo sapiens (Human).